The following is a 26-amino-acid chain: Photosystem II stability/assembly factor HCF136, chloroplastic (26 aa).

The protein belongs to the Ycf48 family.

It localises to the plastid. It is found in the chloroplast thylakoid lumen. Essential for photosystem II (PSII) biogenesis; required for assembly of an early intermediate in PSII assembly that includes D2 (psbD) and cytochrome b559. The polypeptide is Photosystem II stability/assembly factor HCF136, chloroplastic (Populus euphratica (Euphrates poplar)).